The chain runs to 396 residues: Elongation factor Tu (396 aa).

A tr-type G domain is found at 10–206 (KPHVNVGTIG…AVDAYIPTPQ (197 aa)). The tract at residues 19-26 (GHVDHGKT) is G1. Residue 19 to 26 (GHVDHGKT) participates in GTP binding. Thr-26 is a Mg(2+) binding site. A G2 region spans residues 60-64 (GITIA). The interval 81–84 (DCPG) is G3. GTP contacts are provided by residues 81-85 (DCPGH) and 136-139 (NKVD). The segment at 136–139 (NKVD) is G4. The interval 174–176 (SAL) is G5.

The protein belongs to the TRAFAC class translation factor GTPase superfamily. Classic translation factor GTPase family. EF-Tu/EF-1A subfamily. In terms of assembly, monomer.

Its subcellular location is the cytoplasm. The catalysed reaction is GTP + H2O = GDP + phosphate + H(+). Functionally, GTP hydrolase that promotes the GTP-dependent binding of aminoacyl-tRNA to the A-site of ribosomes during protein biosynthesis. This chain is Elongation factor Tu, found in Anaeromyxobacter dehalogenans (strain 2CP-C).